A 1403-amino-acid polypeptide reads, in one-letter code: Baculoviral IAP repeat-containing protein 1a (1403 aa).

BIR repeat units lie at residues 63–128 (RLKT…EFLQ), 162–228 (RLES…EFLQ), and 281–346 (RMDT…VFLQ). Zn(2+) contacts are provided by Cys-315, Cys-318, His-335, and Cys-342. The NACHT domain occupies 464-758 (SVMCVEGETG…EFLAAMRLTE (295 aa)). Lys-476 contributes to the ATP binding site.

As to quaternary structure, interacts (via NACHT domain) with APAF1 (via CARD and NACHT domains).

Functionally, anti-apoptotic protein which acts by inhibiting the activities of CASP3, CASP7 and CASP9. Can inhibit the autocleavage of pro-CASP9 and cleavage of pro-CASP3 by CASP9. Capable of inhibiting CASP9 autoproteolysis at 'Asp-315' and decreasing the rate of auto proteolysis at 'Asp-330'. Acts as a mediator of neuronal survival in pathological conditions. Prevents motor-neuron apoptosis induced by a variety of signals. This chain is Baculoviral IAP repeat-containing protein 1a (Naip1), found in Mus musculus (Mouse).